The chain runs to 330 residues: ADP-L-glycero-D-manno-heptose-6-epimerase (330 aa).

Residues 11–12 (FI), 32–33 (DD), Gln39, Gln54, 75–79 (QGACA), and Asn92 contribute to the NADP(+) site. Tyr139 acts as the Proton acceptor in catalysis. Lys143 is a binding site for NADP(+). Substrate is bound at residue Asn168. Residues Val169 and Lys177 each coordinate NADP(+). The Proton acceptor role is filled by Lys177. Substrate is bound by residues Arg179, His186, 200 to 203 (FGEH), Arg213, and Tyr292.

This sequence belongs to the NAD(P)-dependent epimerase/dehydratase family. HldD subfamily. Homopentamer. The cofactor is NADP(+).

The catalysed reaction is ADP-D-glycero-beta-D-manno-heptose = ADP-L-glycero-beta-D-manno-heptose. Its pathway is nucleotide-sugar biosynthesis; ADP-L-glycero-beta-D-manno-heptose biosynthesis; ADP-L-glycero-beta-D-manno-heptose from D-glycero-beta-D-manno-heptose 7-phosphate: step 4/4. In terms of biological role, catalyzes the interconversion between ADP-D-glycero-beta-D-manno-heptose and ADP-L-glycero-beta-D-manno-heptose via an epimerization at carbon 6 of the heptose. This chain is ADP-L-glycero-D-manno-heptose-6-epimerase, found in Pseudomonas paraeruginosa (strain DSM 24068 / PA7) (Pseudomonas aeruginosa (strain PA7)).